The following is a 363-amino-acid chain: 3-dehydroquinate synthase (363 aa).

Residues 107–111 (GVIGD), 131–132 (TT), Lys-144, and Lys-153 contribute to the NAD(+) site. Glu-186, His-251, and His-268 together coordinate Zn(2+).

Belongs to the sugar phosphate cyclases superfamily. Dehydroquinate synthase family. The cofactor is Co(2+). Zn(2+) is required as a cofactor. Requires NAD(+) as cofactor.

Its subcellular location is the cytoplasm. It carries out the reaction 7-phospho-2-dehydro-3-deoxy-D-arabino-heptonate = 3-dehydroquinate + phosphate. Its pathway is metabolic intermediate biosynthesis; chorismate biosynthesis; chorismate from D-erythrose 4-phosphate and phosphoenolpyruvate: step 2/7. In terms of biological role, catalyzes the conversion of 3-deoxy-D-arabino-heptulosonate 7-phosphate (DAHP) to dehydroquinate (DHQ). The protein is 3-dehydroquinate synthase of Nostoc punctiforme (strain ATCC 29133 / PCC 73102).